We begin with the raw amino-acid sequence, 318 residues long: WRKY transcription factor 28 (318 aa).

Polar residues-rich tracts occupy residues 74 to 84 (SSEVFNSSIDQ) and 106 to 115 (RVSPSNSSSS). The tract at residues 74 to 158 (SSEVFNSSID…KTEVKKQREP (85 aa)) is disordered. Composition is skewed to basic and acidic residues over residues 116–126 (EADHPGEDSGK) and 148–158 (KKTEVKKQREP). The WRKY DNA-binding region spans 166–231 (SEVDHLEDGY…YEGQHNHPIP (66 aa)).

This sequence belongs to the WRKY group II-c family.

Its subcellular location is the nucleus. In terms of biological role, transcription factor. Interacts specifically with the W box (5'-(T)TGAC[CT]-3'), a frequently occurring elicitor-responsive cis-acting element. The protein is WRKY transcription factor 28 (WRKY28) of Arabidopsis thaliana (Mouse-ear cress).